The sequence spans 349 residues: Hydroxymethylglutaryl-CoA synthase (349 aa).

Residues Asp-30 and Ala-31 each coordinate (3S)-3-hydroxy-3-methylglutaryl-CoA. Residue Glu-82 is the Proton donor/acceptor of the active site. Residues Cys-114 and Thr-155 each coordinate (3S)-3-hydroxy-3-methylglutaryl-CoA. The active-site Acyl-thioester intermediate is Cys-114. A CoA-binding site is contributed by Arg-203. (3S)-3-hydroxy-3-methylglutaryl-CoA contacts are provided by Thr-205 and His-238. The Proton donor/acceptor role is filled by His-238. Lys-243 provides a ligand contact to CoA. Residues Asn-270 and Ser-300 each coordinate (3S)-3-hydroxy-3-methylglutaryl-CoA.

It belongs to the thiolase-like superfamily. Archaeal HMG-CoA synthase family. As to quaternary structure, interacts with acetoacetyl-CoA thiolase that catalyzes the precedent step in the pathway and with a DUF35 protein. The acetoacetyl-CoA thiolase/HMG-CoA synthase complex channels the intermediate via a fused CoA-binding site, which allows for efficient coupling of the endergonic thiolase reaction with the exergonic HMGCS reaction.

It catalyses the reaction acetoacetyl-CoA + acetyl-CoA + H2O = (3S)-3-hydroxy-3-methylglutaryl-CoA + CoA + H(+). It participates in metabolic intermediate biosynthesis; (R)-mevalonate biosynthesis; (R)-mevalonate from acetyl-CoA: step 2/3. Its function is as follows. Catalyzes the condensation of acetyl-CoA with acetoacetyl-CoA to form 3-hydroxy-3-methylglutaryl-CoA (HMG-CoA). Functions in the mevalonate (MVA) pathway leading to isopentenyl diphosphate (IPP), a key precursor for the biosynthesis of isoprenoid compounds that are building blocks of archaeal membrane lipids. The sequence is that of Hydroxymethylglutaryl-CoA synthase from Methanococcus maripaludis (strain C6 / ATCC BAA-1332).